Here is a 299-residue protein sequence, read N- to C-terminus: Probable lipid kinase YegS-like (299 aa).

Residues 2 to 133 form the DAGKc domain; sequence EKNPITLLIL…IDIAKVNDGH (132 aa). Residues Thr-40, 66-72, and Thr-95 each bind ATP; that span reads GDGTVNE. The Mg(2+) site is built by Leu-215, Asp-218, and Leu-220. The Proton acceptor role is filled by Glu-271.

This sequence belongs to the diacylglycerol/lipid kinase family. YegS lipid kinase subfamily. The cofactor is Mg(2+). It depends on Ca(2+) as a cofactor.

The protein resides in the cytoplasm. Functionally, probably phosphorylates lipids; the in vivo substrate is unknown. The protein is Probable lipid kinase YegS-like of Pectobacterium atrosepticum (strain SCRI 1043 / ATCC BAA-672) (Erwinia carotovora subsp. atroseptica).